Consider the following 189-residue polypeptide: Putative manganese efflux pump MntP (189 aa).

The next 6 membrane-spanning stretches (helical) occupy residues 3–23 (PVAT…AAIG), 41–61 (LIFG…GKAA), 62–82 (AQYV…VLGA), 104–124 (FWLL…VGAG), 132–152 (IYST…IGVM), and 168–188 (AGGI…LNIF).

This sequence belongs to the MntP (TC 9.B.29) family.

It localises to the cell inner membrane. Probably functions as a manganese efflux pump. The polypeptide is Putative manganese efflux pump MntP (Paraburkholderia phytofirmans (strain DSM 17436 / LMG 22146 / PsJN) (Burkholderia phytofirmans)).